The chain runs to 362 residues: Small ribosomal subunit protein uS4m (362 aa).

Residues 105–179 (TRFDVILLRL…FYKEILVEKI (75 aa)) enclose the S4 RNA-binding domain.

It belongs to the universal ribosomal protein uS4 family. As to quaternary structure, component of the mitochondrial ribosome small subunit.

Its subcellular location is the mitochondrion. The protein is Small ribosomal subunit protein uS4m (RPS4) of Arabidopsis thaliana (Mouse-ear cress).